A 640-amino-acid chain; its full sequence is Threonine--tRNA ligase (640 aa).

One can recognise a TGS domain in the interval 1–59; it reads MKIKVVLPDGSEREYEKGTKPMEIAREVGIKKVIGAVVDEELWDLKRPLERDCRIRFVT. The catalytic stretch occupies residues 240-531; sequence DHRKLGPQLE…LIEHFAGAFP (292 aa). Cysteine 332, histidine 383, and histidine 508 together coordinate Zn(2+).

This sequence belongs to the class-II aminoacyl-tRNA synthetase family. Homodimer. Zn(2+) is required as a cofactor.

It is found in the cytoplasm. The enzyme catalyses tRNA(Thr) + L-threonine + ATP = L-threonyl-tRNA(Thr) + AMP + diphosphate + H(+). In terms of biological role, catalyzes the attachment of threonine to tRNA(Thr) in a two-step reaction: L-threonine is first activated by ATP to form Thr-AMP and then transferred to the acceptor end of tRNA(Thr). Also edits incorrectly charged L-seryl-tRNA(Thr). The sequence is that of Threonine--tRNA ligase from Thermotoga neapolitana (strain ATCC 49049 / DSM 4359 / NBRC 107923 / NS-E).